A 62-amino-acid chain; its full sequence is MGMRMMFTVFLLVVLATTVVSFTSDRASDGRNAAANAFDLIALIARQNCCSIPSCWEKYKCS.

The first 21 residues, 1–21, serve as a signal peptide directing secretion; sequence MGMRMMFTVFLLVVLATTVVS. The propeptide occupies 22 to 46; that stretch reads FTSDRASDGRNAAANAFDLIALIAR. Gln-47 bears the Pyrrolidone carboxylic acid mark. 2 cysteine pairs are disulfide-bonded: Cys-49–Cys-55 and Cys-50–Cys-61.

This sequence belongs to the conotoxin A superfamily. As to expression, expressed by the venom duct.

The protein localises to the secreted. Its function is as follows. Alpha-conotoxins act on postsynaptic membranes, they bind to the nicotinic acetylcholine receptors (nAChR) and thus inhibit them. In Conus caracteristicus (Characteristic cone), this protein is Alpha-conotoxin-like Ca1.1.